The sequence spans 127 residues: Serum amyloid A protein (127 aa).

A signal peptide spans 1 to 18 (MKLLTSLFLLSLVLCVNS). Gln19 carries the post-translational modification Pyrrolidone carboxylic acid. The interval 89-127 (GGSSGRGVEDSMADQEANRWGRSGKDPNRYRPKGLDPKY) is disordered. Over residues 104 to 127 (EANRWGRSGKDPNRYRPKGLDPKY) the composition is skewed to basic and acidic residues.

It belongs to the SAA family. Expressed by the liver; secreted in plasma.

Its subcellular location is the secreted. Its function is as follows. Major acute phase reactant. Apolipoprotein of the HDL complex. This chain is Serum amyloid A protein (SAA1), found in Notamacropus eugenii (Tammar wallaby).